The chain runs to 331 residues: Anthranilate phosphoribosyltransferase (331 aa).

5-phospho-alpha-D-ribose 1-diphosphate-binding positions include G78, 81-82 (GD), T86, 88-91 (NVST), 106-114 (KHGNYSVSS), and S118. G78 provides a ligand contact to anthranilate. Residue S90 coordinates Mg(2+). Residue N109 coordinates anthranilate. R164 contributes to the anthranilate binding site. Positions 222 and 223 each coordinate Mg(2+).

Belongs to the anthranilate phosphoribosyltransferase family. As to quaternary structure, homodimer. Mg(2+) is required as a cofactor.

The enzyme catalyses N-(5-phospho-beta-D-ribosyl)anthranilate + diphosphate = 5-phospho-alpha-D-ribose 1-diphosphate + anthranilate. It functions in the pathway amino-acid biosynthesis; L-tryptophan biosynthesis; L-tryptophan from chorismate: step 2/5. Catalyzes the transfer of the phosphoribosyl group of 5-phosphorylribose-1-pyrophosphate (PRPP) to anthranilate to yield N-(5'-phosphoribosyl)-anthranilate (PRA). The sequence is that of Anthranilate phosphoribosyltransferase from Haloarcula marismortui (strain ATCC 43049 / DSM 3752 / JCM 8966 / VKM B-1809) (Halobacterium marismortui).